The chain runs to 755 residues: PWWP domain-containing protein 2A (755 aa).

Positions 1-15 (MAAVAAEAAATAASP) are enriched in low complexity. Residues 1–153 (MAAVAAEAAA…VPPAGGDSTV (153 aa)) are disordered. Residues 64-76 (DEPPLPPPPPPPG) show a composition bias toward pro residues. Phosphoserine is present on residues Ser81, Ser102, Ser116, and Ser119. Residues 112 to 126 (ELPPSPASPPEQPPA) show a composition bias toward pro residues. An interaction with HDAC1 and MTA1 region spans residues 148–373 (GGDSTVSQLI…KLKTDHKVDG (226 aa)). A Glycyl lysine isopeptide (Lys-Gly) (interchain with G-Cter in SUMO2) cross-link involves residue Lys208. 4 disordered regions span residues 282–301 (YNQSIPQPPPRKIKRPKRKM), 334–384 (KEIR…KRNA), 400–562 (KVSA…GSKN), and 578–626 (SSAS…SKEE). The span at 292 to 301 (RKIKRPKRKM) shows a compositional bias: basic residues. 2 stretches are compositionally biased toward basic and acidic residues: residues 346 to 356 (SKYEDKKRRNE) and 368 to 381 (DHKVDGKNQNESQK). Residues 403-421 (AQANTSKAQLSTKKVLQSK) show a composition bias toward polar residues. Basic and acidic residues predominate over residues 422 to 444 (NMDHAKAREVLKIAKEKAQKKQN). An interaction with the H2A.Z/H2AZ1 region spans residues 423–574 (MDHAKAREVL…SVYMTLNQKK (152 aa)). Residues 508 to 527 (SRCTSTRSAGEAPSENQSPS) show a composition bias toward polar residues. Over residues 593–603 (SSNSECSSSES) the composition is skewed to low complexity. Residues 655-715 (VGDIVWAKIY…LSQLSPFLEN (61 aa)) enclose the PWWP domain.

As to quaternary structure, component of a MTA1-specific subcomplex of the NuRD complex (M1HR), composed of PWWP2A, MTA1/2, HDAC1/2, and RBBP4/7 but does not contain CHD4 and MBD3. Interacts with MTA1; the interaction mediates the association of PWWP2A with the M1HR complex. Interacts with H2A.Z/H2AZ1. Interacts (via PWWP domain) with histone H3 trimethylated at 'Lys-36' (H3K36me3). Does not interact with CHD4 and MBD3. Interacts with MTA1 and with HDAC1 in a MTA1-dependent manner. Does not interact with CHD4 and MBD3.

It is found in the nucleus. Chromatin-binding protein that acts as an adapter between distinct nucleosome components (H3K36me3 or H2A.Z) and chromatin-modifying complexes, contributing to the regulation of the levels of histone acetylation at actively transcribed genes. Competes with CHD4 and MBD3 for interaction with MTA1 to form a NuRD subcomplex, preventing the formation of full NuRD complex (containing CHD4 and MBD3), leading to recruitment of HDACs to gene promoters resulting in turn in the deacetylation of nearby H3K27 and H2A.Z. Plays a role in facilitating transcriptional elongation and repression of spurious transcription initiation through regulation of histone acetylation. Essential for proper mitosis progression. The protein is PWWP domain-containing protein 2A (PWWP2A) of Homo sapiens (Human).